An 862-amino-acid chain; its full sequence is Probable glutaminase ARB_05535/05536 (862 aa).

Positions 1 to 19 (MLSWVLLAWAVACSALAGA) are cleaved as a signal peptide. N-linked (GlcNAc...) asparagine glycosylation is found at N106, N273, N436, N448, N486, N610, and N744. Positions 798 to 862 (FLDDKDNNSP…SQMTIVNEND (65 aa)) are disordered. Over residues 853–862 (SQMTIVNEND) the composition is skewed to polar residues.

It belongs to the fungal glutaminase gtaA family.

It localises to the secreted. It carries out the reaction L-glutamine + H2O = L-glutamate + NH4(+). Functionally, glutaminase catalyzes the hydrolysis of glutamine to glutamic acid and plays a key role in nitrogen metabolism. This is Probable glutaminase ARB_05535/05536 from Arthroderma benhamiae (strain ATCC MYA-4681 / CBS 112371) (Trichophyton mentagrophytes).